Here is a 342-residue protein sequence, read N- to C-terminus: Succinoglycan biosynthesis protein ExoU (342 aa).

It belongs to the glycosyltransferase 2 family.

The protein resides in the cytoplasm. It participates in glycan metabolism; exopolysaccharide biosynthesis. Its function is as follows. Glycosyltransferase required for the synthesis of succinoglycan (EPS I). Needed for the addition of the sixth sugar (glucose), catalyzes the formation of a beta-1,6 linkage between the fifth and sixth sugar. In Rhizobium meliloti (strain 1021) (Ensifer meliloti), this protein is Succinoglycan biosynthesis protein ExoU (exoU).